A 469-amino-acid chain; its full sequence is MSVTVEVADEETHDVPLVEQVRTTPDQNVDVKVQENNVVTTKIGPKLETIPAAKMQDDNGDEEKAENSEGAAAEKVEKQHDDDGVVVHEETDGVASSRSSHHDKQKPGETKKSGDGKMDDDDIITTARSSSRRICGSAASSSDSETADDAPLLPDEGPSHAVRLEMPGDKPASPHDRFPKTPLKTLVAFLMLVVAAAGNTITLSWIHERYPLTPPLPDIVFELIPKIPWGLRLCENLMIGSFVSLLVLILFHRHRWIVLRRLCFIGSILYGMRCITMMVTPVPKADEDFECSPRFGENATFSLIVMRGVWSMFGLGLNLFDNQKVVLCGDYIYSGHTLVLVVSALFIGEYSPRRFYILHWLSWLVCSVGVIFLVLSHGHYTIDVILSYFACTRVFWAYHTQAAHPSIRLSVQNHQAKEFWFPLLRWFEGDIRRPVPRRFDCPISYSQVCNAFRRVRPRGRNGAARPAFE.

The disordered stretch occupies residues 40–177; it reads TTKIGPKLET…GDKPASPHDR (138 aa). Basic and acidic residues-rich tracts occupy residues 72–91, 100–117, and 162–177; these read AAEK…HEET, SHHD…GDGK, and VRLE…PHDR. Transmembrane regions (helical) follow at residues 186-206, 231-251, 262-282, 300-320, 327-347, and 355-375; these read LVAF…LSWI, LRLC…LILF, LCFI…VTPV, TFSL…LNLF, LCGD…ALFI, and FYIL…FLVL. The active site involves His336. Topologically, residues 376–469 are cytoplasmic; that stretch reads SHGHYTIDVI…RNGAARPAFE (94 aa). Active-site residues include His379 and Asp383.

Belongs to the sphingomyelin synthase family.

Its subcellular location is the golgi apparatus membrane. The catalysed reaction is an N-acylsphing-4-enine + a 1,2-diacyl-sn-glycero-3-phosphocholine = a sphingomyelin + a 1,2-diacyl-sn-glycerol. It carries out the reaction an N-acyl-15-methylhexadecasphing-4-enine + a 1,2-diacyl-sn-glycero-3-phosphocholine = an N-acyl-15-methylhexadecasphing-4-enine-1-phosphocholine + a 1,2-diacyl-sn-glycerol. It functions in the pathway lipid metabolism; sphingolipid metabolism. In terms of biological role, sphingomyelin synthases (SM synthase or SMS) synthesize the sphingolipid sphingomyelin (SM) through transfer of the phosphatidyl head group of 1,2-diacyl-sn-glycero-3-phosphocholine (phosphatidylcholine, PC) on to the primary hydroxyl of ceramide (N-acylsphingoid base), yielding 1,2-diacyl-sn-glycerol (diacylglycerol, DAG) as a side product. Functions as a bidirectional lipid cholinephosphotransferases capable of converting PC and ceramide to SM and DAG and vice versa depending on the respective levels of ceramide and DAG as phosphocholine acceptors, respectively. This chain is Phosphatidylcholine:ceramide cholinephosphotransferase 1 (sms-1), found in Caenorhabditis elegans.